The sequence spans 504 residues: Topoisomerase I damage affected protein 11 (504 aa).

A disordered region spans residues 32-62 (RKTGRKIRSASSNGYRLEHHRTSSAGSMHSQ). Residues 179–231 (ALLQSLATKELELLECKQKIEDLKKQTQHEEQNYTRRARELHELKEQVSKHLD) are a coiled coil. Phosphothreonine is present on Thr236. A phosphoserine mark is found at Ser244 and Ser286. Disordered stretches follow at residues 252–306 (LESR…SKQS), 332–377 (WDDS…SVSR), and 400–504 (DVIT…MTDF). Residues 257 to 287 (ENAGNSSLPSSVSKPKNMGHQSTNQSRSVSP) show a composition bias toward polar residues. The segment covering 290–301 (IQERRQRDDSSD) has biased composition (basic and acidic residues). Composition is skewed to polar residues over residues 332-359 (WDDSLSGTPEVQEGTPTSNSESSAQQYD) and 368-377 (KSPSQGSVSR). Over residues 403 to 421 (TDNRCDPVYKSDRQHEQKK) the composition is skewed to basic and acidic residues. Basic residues predominate over residues 470 to 479 (TREKKSKRSS). Positions 491–504 (DNSSVKNSVEMTDF) are enriched in polar residues.

Belongs to the TDA11 family.

The protein resides in the cytoplasm. The protein is Topoisomerase I damage affected protein 11 (TDA11) of Saccharomyces cerevisiae (strain ATCC 204508 / S288c) (Baker's yeast).